We begin with the raw amino-acid sequence, 560 residues long: Membrane protein insertase YidC (560 aa).

A helical membrane pass occupies residues 7 to 27; sequence ILIVALAIVSYVMVLKWNQDY. Positions 38 to 56 are enriched in polar residues; that stretch reads ASSTTTSGLPDTATGNNAA. Positions 38 to 76 are disordered; the sequence is ASSTTTSGLPDTATGNNAAASDDIPRAASDTSAPAETPV. 4 helical membrane-spanning segments follow: residues 367-387, 437-457, 468-488, and 515-535; these read IVGNWGWSIIFLTMLIKGIFF, LGGCLPILVQMPVFLSLYWVL, FMLWITDLSIKDPFFILPIIM, and PIIFTFFFLWFPAGLVLYWVV.

It belongs to the OXA1/ALB3/YidC family. Type 1 subfamily. In terms of assembly, interacts with the Sec translocase complex via SecD. Specifically interacts with transmembrane segments of nascent integral membrane proteins during membrane integration.

The protein resides in the cell inner membrane. Its function is as follows. Required for the insertion and/or proper folding and/or complex formation of integral membrane proteins into the membrane. Involved in integration of membrane proteins that insert both dependently and independently of the Sec translocase complex, as well as at least some lipoproteins. Aids folding of multispanning membrane proteins. In Pseudomonas fluorescens (strain Pf0-1), this protein is Membrane protein insertase YidC.